The primary structure comprises 224 residues: Propanediol dehydratase medium subunit (224 aa).

Positions 1–18 (MEINEKLLRQIIEDVLRD) are targets protein to the BMC.

Belongs to the diol/glycerol dehydratase medium subunit family. In terms of assembly, the propanediol dehydratase enzyme is a heterotrimeric complex composed of a large (PduC), a medium (PduD) and a small (PduE) subunit. Requires adenosylcob(III)alamin as cofactor.

The protein localises to the bacterial microcompartment. It carries out the reaction propane-1,2-diol = propanal + H2O. Its pathway is polyol metabolism; 1,2-propanediol degradation. With respect to regulation, inhibited by glycerol. In terms of biological role, part of the PduCDE complex that catalyzes the dehydration of 1,2-propanediol (1,2-PD) to propionaldehyde. Required for S.typhimurium growth on 1,2-PD as the sole carbon and energy source. This subunit is directly targeted to the bacterial microcompartment (BMC) dedicated to 1,2-PD degradation, and is also responsible for targeting the other 2 subunits (pduC and pduE). The 1,2-PD-specific bacterial microcompartment (BMC) concentrates low levels of 1,2-PD catabolic enzymes, concentrates volatile reaction intermediates thus enhancing pathway flux and keeps the level of toxic, mutagenic propionaldehyde low. The sequence is that of Propanediol dehydratase medium subunit from Salmonella typhimurium (strain LT2 / SGSC1412 / ATCC 700720).